The sequence spans 141 residues: Protein GAT3 (141 aa).

A GATA-type zinc finger spans residues 72–98 (CPQCAVIKTSPQWREGPDGEVTLCNAC).

The polypeptide is Protein GAT3 (GAT3) (Saccharomyces cerevisiae (strain ATCC 204508 / S288c) (Baker's yeast)).